The sequence spans 832 residues: Subtilisin-like protease SBT2.4 (832 aa).

A signal peptide spans 1 to 27 (METNPRKLRSYSYICLIVCIFVLVVCA). One can recognise an Inhibitor I9 domain in the interval 74 to 138 (EAKKIEEIHD…VEEDKGVKLM (65 aa)). Residues 150 to 690 (QQVWQKISNE…AGHVNPARAL (541 aa)) enclose the Peptidase S8 domain. The Charge relay system role is filled by D174. N196 and N238 each carry an N-linked (GlcNAc...) asparagine glycan. The Charge relay system role is filled by H252. Residues 425–524 (TNGSVLQPLT…SAAQIILRYY (100 aa)) enclose the PA domain. An N-linked (GlcNAc...) asparagine glycan is attached at N426. S618 (charge relay system) is an active-site residue. 3 N-linked (GlcNAc...) asparagine glycosylation sites follow: N761, N774, and N800.

The protein belongs to the peptidase S8 family.

The protein localises to the secreted. In terms of biological role, serine protease required for epidermal surface formation in embryos and juvenile plants. Involved in embryonic cuticle formation downstream of BHLH95/ZOU. This Arabidopsis thaliana (Mouse-ear cress) protein is Subtilisin-like protease SBT2.4.